The sequence spans 520 residues: mRNA-capping enzyme subunit beta (520 aa).

The tract at residues 1–185 is disordered; that stretch reads MNVGSILNDD…PQPVFDDQDD (185 aa). 2 stretches are compositionally biased toward polar residues: residues 11-21 and 44-56; these read PPSSGNANGND and ITSM…SDST. Over residues 92–108 the composition is skewed to low complexity; sequence SSSSVGSSEHSSARSSP. Composition is skewed to basic and acidic residues over residues 126 to 135 and 149 to 176; these read PATKTEKKAE and KLEE…KKEP.

It belongs to the fungal TPase family. In terms of assembly, heterodimer. The mRNA-capping enzyme is composed of two separate chains alpha and beta, respectively a mRNA guanylyltransferase and an mRNA 5'-triphosphate monophosphatase. The cofactor is Mg(2+).

The protein localises to the nucleus. It carries out the reaction a 5'-end triphospho-ribonucleoside in mRNA + H2O = a 5'-end diphospho-ribonucleoside in mRNA + phosphate + H(+). In terms of biological role, first step of mRNA capping. Converts the 5'-triphosphate end of a nascent mRNA chain into a diphosphate end. This chain is mRNA-capping enzyme subunit beta (CET1), found in Candida albicans (strain SC5314 / ATCC MYA-2876) (Yeast).